Reading from the N-terminus, the 586-residue chain is Phosphomethylpyrimidine synthase (586 aa).

2 disordered regions span residues 38–59 (IELSDTNGVPNSPIRVYDTSGP) and 92–114 (GREIKPEDDGVKAASNHTPVFPQ). Residues 92 to 102 (GREIKPEDDGV) show a composition bias toward basic and acidic residues. Residues N193, M222, Y251, H287, 307–309 (SRG), 348–351 (DGLR), and E387 each bind substrate. H391 lines the Zn(2+) pocket. Substrate is bound at residue Y414. H455 lines the Zn(2+) pocket. [4Fe-4S] cluster contacts are provided by C535, C538, and C543.

Belongs to the ThiC family. The cofactor is [4Fe-4S] cluster.

It carries out the reaction 5-amino-1-(5-phospho-beta-D-ribosyl)imidazole + S-adenosyl-L-methionine = 4-amino-2-methyl-5-(phosphooxymethyl)pyrimidine + CO + 5'-deoxyadenosine + formate + L-methionine + 3 H(+). Its pathway is cofactor biosynthesis; thiamine diphosphate biosynthesis. Catalyzes the synthesis of the hydroxymethylpyrimidine phosphate (HMP-P) moiety of thiamine from aminoimidazole ribotide (AIR) in a radical S-adenosyl-L-methionine (SAM)-dependent reaction. This Bacillus cytotoxicus (strain DSM 22905 / CIP 110041 / 391-98 / NVH 391-98) protein is Phosphomethylpyrimidine synthase.